A 413-amino-acid chain; its full sequence is PCI domain-containing protein 2 homolog (413 aa).

In terms of domain architecture, PCI spans 222 to 403 (VAYNYFLGRK…QKLVISKMNA (182 aa)).

It belongs to the CSN12 family.

The sequence is that of PCI domain-containing protein 2 homolog from Caenorhabditis elegans.